The following is a 340-amino-acid chain: GTPase Obg (340 aa).

The Obg domain maps to 1 to 159 (MDFIDEVKLY…KYVVLKLKVL (159 aa)). Residues 160–329 (SDVGIIGMPN…LNEKLKKGSS (170 aa)) form the OBG-type G domain. Residues 166–173 (GMPNAGKS), 191–195 (FTTIK), 212–215 (DIPG), 279–282 (NKCD), and 310–312 (GED) contribute to the GTP site. 2 residues coordinate Mg(2+): Ser-173 and Thr-193.

It belongs to the TRAFAC class OBG-HflX-like GTPase superfamily. OBG GTPase family. In terms of assembly, monomer. The cofactor is Mg(2+).

It is found in the cytoplasm. Its function is as follows. An essential GTPase which binds GTP, GDP and possibly (p)ppGpp with moderate affinity, with high nucleotide exchange rates and a fairly low GTP hydrolysis rate. Plays a role in control of the cell cycle, stress response, ribosome biogenesis and in those bacteria that undergo differentiation, in morphogenesis control. This is GTPase Obg from Wolbachia sp. subsp. Brugia malayi (strain TRS).